We begin with the raw amino-acid sequence, 291 residues long: Protease HtpX homolog (291 aa).

2 helical membrane-spanning segments follow: residues 11 to 31 (INTF…GLLA) and 34 to 54 (FLGM…ACVQ). H140 is a binding site for Zn(2+). E141 is an active-site residue. A Zn(2+)-binding site is contributed by H144. The next 2 helical transmembrane spans lie at 155 to 175 (IVFG…RALI) and 186 to 206 (AFSF…AMLV). E215 is a Zn(2+) binding site.

Belongs to the peptidase M48B family. Requires Zn(2+) as cofactor.

It localises to the cell membrane. This is Protease HtpX homolog from Tropheryma whipplei (strain Twist) (Whipple's bacillus).